A 467-amino-acid polypeptide reads, in one-letter code: UDP-N-acetylmuramate--L-alanine ligase (467 aa).

Glycine 114–threonine 120 contacts ATP.

It belongs to the MurCDEF family.

Its subcellular location is the cytoplasm. It catalyses the reaction UDP-N-acetyl-alpha-D-muramate + L-alanine + ATP = UDP-N-acetyl-alpha-D-muramoyl-L-alanine + ADP + phosphate + H(+). It functions in the pathway cell wall biogenesis; peptidoglycan biosynthesis. Functionally, cell wall formation. The sequence is that of UDP-N-acetylmuramate--L-alanine ligase from Chlorobium chlorochromatii (strain CaD3).